Consider the following 1154-residue polypeptide: ATP-dependent helicase/deoxyribonuclease subunit B (1154 aa).

The UvrD-like helicase ATP-binding domain occupies Met1–Lys284. Gly8 to Thr15 is an ATP binding site. The UvrD-like helicase C-terminal domain maps to His279–Asp583. [4Fe-4S] cluster is bound by residues Cys799, Cys1120, Cys1123, and Cys1129.

This sequence belongs to the helicase family. AddB/RexB type 1 subfamily. Heterodimer of AddA and AddB. Requires Mg(2+) as cofactor. It depends on [4Fe-4S] cluster as a cofactor.

In terms of biological role, the heterodimer acts as both an ATP-dependent DNA helicase and an ATP-dependent, dual-direction single-stranded exonuclease. Recognizes the chi site generating a DNA molecule suitable for the initiation of homologous recombination. The AddB subunit has 5' -&gt; 3' nuclease activity but not helicase activity. The protein is ATP-dependent helicase/deoxyribonuclease subunit B of Anoxybacillus flavithermus (strain DSM 21510 / WK1).